The sequence spans 413 residues: Tyrosine--tRNA ligase (413 aa).

The 'HIGH' region motif lies at 59–68 (PTAPDIHIGH). The 'KMSKS' region signature appears at 243 to 247 (KMSKS). Position 246 (Lys-246) interacts with ATP. The region spanning 351-411 (LAIGQLLKQA…GKRRFARVTL (61 aa)) is the S4 RNA-binding domain.

It belongs to the class-I aminoacyl-tRNA synthetase family. TyrS type 2 subfamily. Homodimer.

It localises to the cytoplasm. The catalysed reaction is tRNA(Tyr) + L-tyrosine + ATP = L-tyrosyl-tRNA(Tyr) + AMP + diphosphate + H(+). Its function is as follows. Catalyzes the attachment of tyrosine to tRNA(Tyr) in a two-step reaction: tyrosine is first activated by ATP to form Tyr-AMP and then transferred to the acceptor end of tRNA(Tyr). The protein is Tyrosine--tRNA ligase of Burkholderia lata (strain ATCC 17760 / DSM 23089 / LMG 22485 / NCIMB 9086 / R18194 / 383).